Consider the following 140-residue polypeptide: Large ribosomal subunit protein uL13 (140 aa).

Belongs to the universal ribosomal protein uL13 family. Part of the 50S ribosomal subunit.

Functionally, this protein is one of the early assembly proteins of the 50S ribosomal subunit, although it is not seen to bind rRNA by itself. It is important during the early stages of 50S assembly. This is Large ribosomal subunit protein uL13 from Sulfurimonas denitrificans (strain ATCC 33889 / DSM 1251) (Thiomicrospira denitrificans (strain ATCC 33889 / DSM 1251)).